The primary structure comprises 273 residues: Sanguinarine reductase (273 aa).

The Proton donor role is filled by Ser-153. Substrate contacts are provided by residues 157–161 (CDPDH) and Lys-175.

It belongs to the NAD(P)-dependent epimerase/dehydratase family. Monomer.

The catalysed reaction is dihydrosanguinarine + NADP(+) = sanguinarine + NADPH. The enzyme catalyses dihydrosanguinarine + NAD(+) = sanguinarine + NADH. It carries out the reaction dihydrochelirubine + NAD(+) = chelirubine + NADH. It catalyses the reaction dihydrochelirubine + NADP(+) = chelirubine + NADPH. Its activity is regulated as follows. Inhibited by iodoacetamide and irreversibly by its product, dihydrosanguinarine. Functionally, catalyzes the reduction of benzophenanthridines, preferentially sanguinarine, to the corresponding dihydroalkaloids. Involved in detoxifying the phytoalexins produced by plant itself. The sanguinarine produced by intact cells upon elicitation, after excretion and binding to cell wall elements, is rapidly reabsorbed and reduced to the less toxic dihydrosanguinarine. Can work with both NAD(P) or NAD as a hydrogen donor, but at low concentrations, the reaction velocity with NAD(P)H is threefold higher than with NADH. However, chelerythrine shows maximum conversion rates with NADH. The substrate preference is sanguinarine &gt; chelerythrine &gt; chelirubine, macarpine or 10-OH-chelerythrine. No activity with berberine or phenanthridine cations. The sequence is that of Sanguinarine reductase from Eschscholzia californica (California poppy).